The chain runs to 163 residues: Ubiquitin-like protein 1-ribosomal protein eS31 fusion protein (163 aa).

The region spanning 1-70 (MVFVKTLHRT…IYVNLELLGG (70 aa)) is the Ubiquitin-like domain. Gly70 participates in a covalent cross-link: Glycyl lysine isopeptide (Gly-Lys) (interchain with K-? in acceptor proteins). A C4-type zinc finger spans residues 115 to 138 (CQQPSCGGGVFMAQHANRHYCGRC).

In the N-terminal section; belongs to the ubiquitin family. This sequence in the C-terminal section; belongs to the eukaryotic ribosomal protein eS31 family.

This chain is Ubiquitin-like protein 1-ribosomal protein eS31 fusion protein, found in Caenorhabditis elegans.